The sequence spans 130 residues: UPF0212 protein PF1486 (130 aa).

It belongs to the UPF0212 family.

This Pyrococcus furiosus (strain ATCC 43587 / DSM 3638 / JCM 8422 / Vc1) protein is UPF0212 protein PF1486.